The primary structure comprises 283 residues: Lysozyme-like protein 7 (283 aa).

Positions 1 to 18 (MAHKSIVIFSVLAVLCHS) are cleaved as a signal peptide. The region spanning 53–273 (YAYALDIYVQ…AVEEDGKIYA (221 aa)) is the Ch-type lysozyme domain.

It belongs to the glycosyl hydrolase 25 family. As to expression, expressed in intestine. Expressed in rectal gland cells and head neurons.

Functionally, plays a role in resistance to Gram-positive bacteria B.thuringiensis and M.nematophilum and Gram-negative bacteria S.boydii or S.flexneri infection and to fungus C.neoformans infection. Plays a role in susceptibility to Gram-negative bacterium S.typhimurium infection. The chain is Lysozyme-like protein 7 from Caenorhabditis elegans.